A 158-amino-acid chain; its full sequence is NADH-quinone oxidoreductase subunit B (158 aa).

Residues Cys37, Cys38, Cys102, and Cys132 each contribute to the [4Fe-4S] cluster site.

The protein belongs to the complex I 20 kDa subunit family. In terms of assembly, NDH-1 is composed of 14 different subunits. Subunits NuoB, C, D, E, F, and G constitute the peripheral sector of the complex. [4Fe-4S] cluster is required as a cofactor.

It localises to the cell inner membrane. The enzyme catalyses a quinone + NADH + 5 H(+)(in) = a quinol + NAD(+) + 4 H(+)(out). Its function is as follows. NDH-1 shuttles electrons from NADH, via FMN and iron-sulfur (Fe-S) centers, to quinones in the respiratory chain. Couples the redox reaction to proton translocation (for every two electrons transferred, four hydrogen ions are translocated across the cytoplasmic membrane), and thus conserves the redox energy in a proton gradient. The sequence is that of NADH-quinone oxidoreductase subunit B from Legionella pneumophila (strain Paris).